The chain runs to 235 residues: MSRYGRYGGETKVYVGNLGTGAGKGELERAFSYYGPLRTVWIARNPPGFAFVEFEDPRDAEDAVRGLDGKVICGSRVRVELSTGMPRRSRFDRPPARRPFDPNDRCYECGEKGHYAYDCHRYSRRRRSRSRSRSHSRSRGRRYSRSRSRSRGRRSRSASPRRSRSVSLRRSRSASLRRSRSGSIKGSRSRSRSRSRSRSLSRPRSSRSKSRSPSPKRSRSPSGSPRRSASPERVD.

One can recognise an RRM domain in the interval 11–84 (TKVYVGNLGT…SRVRVELSTG (74 aa)). Lys24 bears the N6-acetyllysine; alternate mark. Residue Lys24 forms a Glycyl lysine isopeptide (Lys-Gly) (interchain with G-Cter in SUMO2); alternate linkage. The residue at position 32 (Ser32) is a Phosphoserine. Residues 81 to 98 (LSTGMPRRSRFDRPPARR) form a sufficient for interaction with NXF1 region. Residues 104-120 (DRCYECGEKGHYAYDCH) form a CCHC-type zinc finger. Residues 123–180 (SRRRRSRSRSRSHSRSRGRRYSRSRSRSRGRRSRSASPRRSRSVSLRRSRSASLRRSR) are compositionally biased toward basic residues. Residues 123 to 235 (SRRRRSRSRS…RRSASPERVD (113 aa)) are disordered. 4 consecutive repeat copies span residues 153–160 (RRSRSASP), 161–168 (RRSRSVSL), 169–176 (RRSRSASL), and 177–184 (RRSRSGSI). Residues 153–223 (RRSRSASPRR…SPKRSRSPSG (71 aa)) form a 6 X 8 AA repeats of R-R-S-R-S-X-S-X region. A phosphoserine mark is found at Ser163, Ser165, and Ser167. Ser181, Ser183, Ser189, Ser191, and Ser193 each carry phosphoserine. Residues 187–219 (SRSRSRSRSRSRSLSRPRSSRSKSRSPSPKRSR) show a composition bias toward basic residues. One copy of the 5; approximate repeat lies at 208-215 (SKSRSPSP). The 6; approximate repeat unit spans residues 216 to 223 (KRSRSPSG). Phosphoserine is present on residues Ser228 and Ser230.

It belongs to the splicing factor SR family. As to quaternary structure, found in large molecular weight complexes containing CCNL1 and the p110 isoforms of either CDC2L1 or CDC2L2. Interacts with CCNL2 and CPSF6. Interacts with NXF1. Interacts with YTHDC1. In terms of processing, extensively phosphorylated on serine residues in the RS domain.

It is found in the nucleus. Its subcellular location is the cytoplasm. Functionally, required for pre-mRNA splicing. Represses the splicing of MAPT/Tau exon 10. May function as export adapter involved in mRNA nuclear export such as of histone H2A. Binds mRNA which is thought to be transferred to the NXF1-NXT1 heterodimer for export (TAP/NXF1 pathway); enhances NXF1-NXT1 RNA-binding activity. RNA-binding is semi-sequence specific. The sequence is that of Serine/arginine-rich splicing factor 7 (SRSF7) from Bos taurus (Bovine).